The primary structure comprises 393 residues: Flap endonuclease 1 (393 aa).

The interval 1 to 108 (MGVLGLSKLL…SELESRRQRA (108 aa)) is N-domain. D34 serves as a coordination point for Mg(2+). R74 lines the DNA pocket. D90 contacts Mg(2+). The segment covering 99–120 (SELESRRQRAEDAKHEFEKAKE) has biased composition (basic and acidic residues). The disordered stretch occupies residues 99 to 127 (SELESRRQRAEDAKHEFEKAKEEGDDEAM). Positions 126–257 (AMEKMSKRMV…HKAWEGIKKY (132 aa)) are I-domain. Mg(2+)-binding residues include E162, E164, D183, and D185. E162 is a DNA binding site. Residues G235 and D237 each contribute to the DNA site. Residue D237 participates in Mg(2+) binding. Residues 340–348 (TQGRLDQFF) form an interaction with PCNA region. The segment at 358 to 393 (NSEASTAGTKRNRGAVALPGVLQRKSSSGHKKAVKK) is disordered. Basic residues predominate over residues 384 to 393 (SSGHKKAVKK).

The protein belongs to the XPG/RAD2 endonuclease family. FEN1 subfamily. Interacts with PCNA. Three molecules of FEN1 bind to one PCNA trimer with each molecule binding to one PCNA monomer. PCNA stimulates the nuclease activity without altering cleavage specificity. It depends on Mg(2+) as a cofactor. Post-translationally, phosphorylated. Phosphorylation upon DNA damage induces relocalization to the nuclear plasma.

The protein localises to the nucleus. Its subcellular location is the nucleolus. It is found in the nucleoplasm. The protein resides in the mitochondrion. Structure-specific nuclease with 5'-flap endonuclease and 5'-3' exonuclease activities involved in DNA replication and repair. During DNA replication, cleaves the 5'-overhanging flap structure that is generated by displacement synthesis when DNA polymerase encounters the 5'-end of a downstream Okazaki fragment. It enters the flap from the 5'-end and then tracks to cleave the flap base, leaving a nick for ligation. Also involved in the long patch base excision repair (LP-BER) pathway, by cleaving within the apurinic/apyrimidinic (AP) site-terminated flap. Acts as a genome stabilization factor that prevents flaps from equilibrating into structures that lead to duplications and deletions. Also possesses 5'-3' exonuclease activity on nicked or gapped double-stranded DNA, and exhibits RNase H activity. Also involved in replication and repair of rDNA and in repairing mitochondrial DNA. This Trypanosoma brucei brucei (strain 927/4 GUTat10.1) protein is Flap endonuclease 1.